The chain runs to 999 residues: RING finger domain and kelch repeat-containing protein DDB_G0271372 (999 aa).

The RING-type zinc finger occupies 7–49; it reads CPNCLKVFNNPRQLECDHILCTRCIEGVYNPGRTPIIKCPVCD. Over residues 92 to 143 the composition is skewed to low complexity; sequence STGSSNNNNNNNNNNNNNNNNFVINNSNNKNNGATTTTTTTTTTTNSNSNST. 2 disordered regions span residues 92 to 147 and 159 to 209; these read STGS…KSKV and ASPK…SSPP. A compositionally biased stretch (polar residues) spans 165 to 196; it reads GSSQGSLTTINNQKKLTLSPQRASSTTTTSVN. Residues 258-302 form a B box-type zinc finger; sequence AELSKCNDHDQKKFTIFCTDCDQLLCDECLNNNQQQHENHQLNKI. Positions 263, 266, 286, and 294 each coordinate Zn(2+). The stretch at 355–402 forms a coiled coil; the sequence is DIDTMIENLKERKNALISQIDKEYEEQKLELKDQIETINTTIVDIQNN. Composition is skewed to low complexity over residues 485 to 516 and 526 to 536; these read GVSS…IITT and SPSPTSSSSST. Residues 485–637 are disordered; the sequence is GVSSSPTGTG…TSTNGSNTKI (153 aa). Residues 552 to 612 show a composition bias toward polar residues; sequence LSSQNYDNFG…SHGSKLNDNI (61 aa). The segment covering 613–635 has biased composition (low complexity); the sequence is NTNNNNSPSPTSSSTTSTNGSNT. 5 Kelch repeats span residues 655–700, 702–745, 748–793, 796–842, and 844–892; these read ITAR…YDNN, TIYR…VFDG, YIYL…YHPT, CIYV…FDGS, and YINI…SMNL. Low complexity predominate over residues 904–924; the sequence is NSFSSISSHSSLNSSSSNNGI. The disordered stretch occupies residues 904 to 936; it reads NSFSSISSHSSLNSSSSNNGISGSGGSGGDNEI.

This is RING finger domain and kelch repeat-containing protein DDB_G0271372 from Dictyostelium discoideum (Social amoeba).